The primary structure comprises 149 residues: Probable glycine-rich RNA-binding protein 1 (149 aa).

One can recognise an RRM domain in the interval 8-83 (YRCFVGGLAW…LDGRNITAQA (76 aa)). The segment at 80 to 149 (TAQARGSGTR…GRSEGGSWRN (70 aa)) is disordered. Gly residues-rich tracts occupy residues 87-101 (GTRG…SGGY), 110-123 (YNRG…GGYG), and 131-143 (YGDG…GRSE).

The protein belongs to the GR-RBP family.

Functionally, possibly has a role in RNA transcription or processing during stress. The protein is Probable glycine-rich RNA-binding protein 1 (RBG1) of Arabidopsis thaliana (Mouse-ear cress).